The sequence spans 367 residues: Glutamate 5-kinase (367 aa).

Lys-10 serves as a coordination point for ATP. Substrate-binding residues include Ser-50, Asp-137, and Asn-149. Residues 169–170 (TD) and 211–217 (TGGMSTK) each bind ATP. The PUA domain occupies 275-353 (AGEITVDDGA…QQIAEILGYE (79 aa)).

It belongs to the glutamate 5-kinase family.

It is found in the cytoplasm. The enzyme catalyses L-glutamate + ATP = L-glutamyl 5-phosphate + ADP. Its pathway is amino-acid biosynthesis; L-proline biosynthesis; L-glutamate 5-semialdehyde from L-glutamate: step 1/2. Functionally, catalyzes the transfer of a phosphate group to glutamate to form L-glutamate 5-phosphate. The sequence is that of Glutamate 5-kinase from Pectobacterium carotovorum subsp. carotovorum (strain PC1).